The primary structure comprises 91 residues: Small ribosomal subunit protein uS19 (91 aa).

The protein belongs to the universal ribosomal protein uS19 family.

Protein S19 forms a complex with S13 that binds strongly to the 16S ribosomal RNA. In Marinomonas sp. (strain MWYL1), this protein is Small ribosomal subunit protein uS19.